Consider the following 209-residue polypeptide: Imidazole glycerol phosphate synthase subunit HisH (209 aa).

The Glutamine amidotransferase type-1 domain occupies 1–205; it reads MIAIIDYGMG…QGVVEAWKSS (205 aa). C79 functions as the Nucleophile in the catalytic mechanism. Active-site residues include H180 and E182.

In terms of assembly, heterodimer of HisH and HisF.

The protein localises to the cytoplasm. It catalyses the reaction 5-[(5-phospho-1-deoxy-D-ribulos-1-ylimino)methylamino]-1-(5-phospho-beta-D-ribosyl)imidazole-4-carboxamide + L-glutamine = D-erythro-1-(imidazol-4-yl)glycerol 3-phosphate + 5-amino-1-(5-phospho-beta-D-ribosyl)imidazole-4-carboxamide + L-glutamate + H(+). It carries out the reaction L-glutamine + H2O = L-glutamate + NH4(+). It functions in the pathway amino-acid biosynthesis; L-histidine biosynthesis; L-histidine from 5-phospho-alpha-D-ribose 1-diphosphate: step 5/9. Its function is as follows. IGPS catalyzes the conversion of PRFAR and glutamine to IGP, AICAR and glutamate. The HisH subunit catalyzes the hydrolysis of glutamine to glutamate and ammonia as part of the synthesis of IGP and AICAR. The resulting ammonia molecule is channeled to the active site of HisF. The chain is Imidazole glycerol phosphate synthase subunit HisH from Bacillus cereus (strain ATCC 14579 / DSM 31 / CCUG 7414 / JCM 2152 / NBRC 15305 / NCIMB 9373 / NCTC 2599 / NRRL B-3711).